The sequence spans 118 residues: Integration host factor subunit alpha (118 aa).

Positions Asn97–Gly118 are disordered.

The protein belongs to the bacterial histone-like protein family. As to quaternary structure, heterodimer of an alpha and a beta chain.

In terms of biological role, this protein is one of the two subunits of integration host factor, a specific DNA-binding protein that functions in genetic recombination as well as in transcriptional and translational control. The polypeptide is Integration host factor subunit alpha (Rhodopseudomonas palustris (strain ATCC BAA-98 / CGA009)).